Consider the following 446-residue polypeptide: Glutamine synthetase (446 aa).

The 86-residue stretch at 18 to 103 (ENVRYLRLQF…LICDVFKTDG (86 aa)) folds into the GS beta-grasp domain. The GS catalytic domain occupies 110-446 (PRANLKRVLR…WEREQYIKQY (337 aa)). 2 residues coordinate Mg(2+): Glu134 and Glu136. Residue Glu186 coordinates ATP. Mg(2+) is bound by residues Glu191 and Glu198. L-glutamate contacts are provided by residues 242–243 (NG) and Gly243. A Mg(2+)-binding site is contributed by His247. Residue Ser251 participates in ATP binding. Arg300, Glu306, and Arg318 together coordinate L-glutamate. ATP contacts are provided by Arg318 and Arg323. Glu335 contributes to the Mg(2+) binding site. Arg337 is an L-glutamate binding site.

This sequence belongs to the glutamine synthetase family. Oligomer of 12 subunits arranged in the form of two hexagons. In its feedback-inhibited form, interacts with TnrA in order to block its DNA-binding activity. Mg(2+) serves as cofactor.

It is found in the cytoplasm. It carries out the reaction L-glutamate + NH4(+) + ATP = L-glutamine + ADP + phosphate + H(+). With respect to regulation, inhibited by glutamine. Its function is as follows. Glutamine synthetase (GS) is an unusual multitasking protein that functions as an enzyme, a transcription coregulator, and a chaperone in ammonium assimilation and in the regulation of genes involved in nitrogen metabolism. It catalyzes the ATP-dependent biosynthesis of glutamine from glutamate and ammonia. Feedback-inhibited GlnA also interacts with and regulates the activity of the transcriptional regulator TnrA. During nitrogen limitation, TnrA is in its DNA-binding active state and turns on the transcription of genes required for nitrogen assimilation. Under conditions of nitrogen excess, feedback-inhibited GlnA forms a stable complex with TnrA, which inhibits its DNA-binding activity. In contrast, feedback-inhibited GlnA acts as a chaperone to stabilize the DNA-binding activity of GlnR, which represses the transcription of nitrogen assimilation genes. This Staphylococcus epidermidis (strain ATCC 35984 / DSM 28319 / BCRC 17069 / CCUG 31568 / BM 3577 / RP62A) protein is Glutamine synthetase.